Reading from the N-terminus, the 191-residue chain is NF-kappa-B inhibitor-interacting Ras-like protein 2 (191 aa).

The interval 1-191 (MGKSCKVVVC…KNKGSGSLDG (191 aa)) is small GTPase-like. A GTP-binding site is contributed by 11-18 (GQASVGKT). The short motif at 35–43 (MIETQEDIY) is the Effector region element. GTP contacts are provided by residues 61-65 (DTRGL) and 120-123 (NKCD). Residues 169-191 (TQPQSKSAFPLSRKNKGSGSLDG) form a disordered region.

The protein belongs to the small GTPase superfamily. Ras family. KappaB-Ras subfamily. Interacts with both NF-kappa-B inhibitor alpha (NFKBIA) and beta (NFKBIB) in vitro. However, it probably only interacts with NFKBIB in vivo. Interacts with GFOD1. Widely expressed.

The protein resides in the cytoplasm. In terms of biological role, atypical Ras-like protein that acts as a potent regulator of NF-kappa-B activity by preventing the degradation of NF-kappa-B inhibitor beta (NFKBIB) by most signals, explaining why NFKBIB is more resistant to degradation. May act by blocking phosphorylation of NFKBIB and nuclear localization of p65/RELA NF-kappa-B subunit. It is unclear whether it acts as a GTPase. Both GTP- and GDP-bound forms block phosphorylation of NFKBIB. This Homo sapiens (Human) protein is NF-kappa-B inhibitor-interacting Ras-like protein 2 (NKIRAS2).